We begin with the raw amino-acid sequence, 901 residues long: MRILKIQTLRGPNYWSIRRHKLIVMRLDLETLAETPSNEIPGFYEGLVEALPSLEGHYCSPGCHGGFLMRVREGTMMGHIVEHVALELQELAGMHVGFGRTRETATPGIYQVVIEYLNEEAGRYAGRAAVRLCQSIVDRGRYPKAELEQDIQDLKDLWRDASLGPSTEAIVKEAEKRGIPWMQLSARFLIQLGYGVNHKRMQATMTDKTGILGVELACDKEATKRILAASGVPVPRGTVINFLDDLEEAIEYVGGYPIVIKPLDGNHGRGITIDIRSWEEAEAAYEAARQVSRSIIVERYYVGRDHRVLVVDGKVVAVAERVPAHVIGNGRSTVAELIEEINQDPNRGDGHDKVLTKIELDRTSYQLLERAGYTLNSVPPKGTICYLRATANLSTGGTAVDRTDEIHPENVWLAQRVVKIIGLDIAGLDIVTTDISRPLRELDGVIVEVNAAPGFRMHVAPSQGIPRNVAGAVMDMLFPNEQSGRIPILSVTGTNGKTTTTRLLAHIYKQTGKVVGYTTTDGTYIGDYLVESGDNTGPQSAHVILQDPTVEVAVLETARGGILRSGLGFESANVGVVLNVAADHLGIGDIDTIDQLANLKSVVAESVYPDGYAVLNADDRRVAAMAEKTKANIAYFTMNSESELVRKHIQKGGVAAVYENGYLSIVKGDWTHRIERAEQIPLTMGGRAPFMIANALAASLAAFVQNVSIEQIRAGLRTFRASVSQTPGRMNLFNLGNYHALVDYAHNPASYEAVGAFVRNWTSGQRIGVVGGPGDRRDEDFVTLGKLAAEIFDYIIVKEDDDTRGRPRGSASELITKGITQVKPDARYESILDETQAINKGLDMAPANGLVVILPESVSRAIKLIKLRGLVKEEIQQQNSSTTVIDNQNGVASSSVINTLL.

Residues 224 to 478 (KRILAASGVP…VAGAVMDMLF (255 aa)) enclose the ATP-grasp domain. 493–499 (GTNGKTT) provides a ligand contact to ATP.

This sequence in the C-terminal section; belongs to the MurCDEF family. As to quaternary structure, homodimer.

It catalyses the reaction [L-4-(L-arginin-2-N-yl)aspartate](n) + L-aspartate + ATP = [L-4-(L-arginin-2-N-yl)aspartate](n)-L-aspartate + ADP + phosphate + H(+). The catalysed reaction is [L-4-(L-arginin-2-N-yl)aspartate](n)-L-aspartate + L-arginine + ATP = [L-4-(L-arginin-2-N-yl)aspartate](n+1) + ADP + phosphate + H(+). Catalyzes the ATP-dependent polymerization of arginine and aspartate to multi-L-arginyl-poly-L-aspartic acid (cyanophycin; a water-insoluble reserve polymer). The protein is Cyanophycin synthetase (cphA) of Nostoc sp. (strain PCC 7120 / SAG 25.82 / UTEX 2576).